A 346-amino-acid chain; its full sequence is S-adenosylmethionine:tRNA ribosyltransferase-isomerase (346 aa).

This sequence belongs to the QueA family. Monomer.

The protein resides in the cytoplasm. It carries out the reaction 7-aminomethyl-7-carbaguanosine(34) in tRNA + S-adenosyl-L-methionine = epoxyqueuosine(34) in tRNA + adenine + L-methionine + 2 H(+). The protein operates within tRNA modification; tRNA-queuosine biosynthesis. Transfers and isomerizes the ribose moiety from AdoMet to the 7-aminomethyl group of 7-deazaguanine (preQ1-tRNA) to give epoxyqueuosine (oQ-tRNA). This is S-adenosylmethionine:tRNA ribosyltransferase-isomerase from Borreliella afzelii (strain PKo) (Borrelia afzelii).